The chain runs to 1311 residues: Clustered mitochondria protein homolog (1311 aa).

Residues methionine 1–glycine 46 form a disordered region. Polar residues predominate over residues valine 7–leucine 24. A Clu domain is found at aspartate 335–methionine 579. Disordered stretches follow at residues glutamate 629–isoleucine 691 and glutamine 915–serine 965. A compositionally biased stretch (basic and acidic residues) spans glutamate 655–isoleucine 691. The span at glutamine 915–glutamate 930 shows a compositional bias: polar residues. TPR repeat units lie at residues alanine 1034–threonine 1067, leucine 1076–valine 1109, and isoleucine 1118–valine 1151. The interval valine 1236 to lysine 1311 is disordered. Residues leucine 1242 to glutamine 1253 are compositionally biased toward polar residues. Residues alanine 1259–lysine 1279 show a composition bias toward basic and acidic residues. Basic residues predominate over residues lysine 1289–glycine 1303.

Belongs to the CLU family. In terms of assembly, may associate with the eukaryotic translation initiation factor 3 (eIF-3) complex.

The protein resides in the cytoplasm. Its function is as follows. mRNA-binding protein involved in proper cytoplasmic distribution of mitochondria. The polypeptide is Clustered mitochondria protein homolog (Sclerotinia sclerotiorum (strain ATCC 18683 / 1980 / Ss-1) (White mold)).